The sequence spans 444 residues: Phosphoglucosamine mutase (444 aa).

Ser102 functions as the Phosphoserine intermediate in the catalytic mechanism. Mg(2+)-binding residues include Ser102, Asp241, Asp243, and Asp245. Ser102 carries the post-translational modification Phosphoserine.

This sequence belongs to the phosphohexose mutase family. Mg(2+) is required as a cofactor. Activated by phosphorylation.

The enzyme catalyses alpha-D-glucosamine 1-phosphate = D-glucosamine 6-phosphate. In terms of biological role, catalyzes the conversion of glucosamine-6-phosphate to glucosamine-1-phosphate. This is Phosphoglucosamine mutase from Acidovorax ebreus (strain TPSY) (Diaphorobacter sp. (strain TPSY)).